The chain runs to 303 residues: tRNA pseudouridine synthase B (303 aa).

The active-site Nucleophile is aspartate 53.

It belongs to the pseudouridine synthase TruB family. Type 1 subfamily.

The enzyme catalyses uridine(55) in tRNA = pseudouridine(55) in tRNA. Functionally, responsible for synthesis of pseudouridine from uracil-55 in the psi GC loop of transfer RNAs. The polypeptide is tRNA pseudouridine synthase B (Zymomonas mobilis subsp. mobilis (strain ATCC 31821 / ZM4 / CP4)).